Consider the following 842-residue polypeptide: MAQNLDAQYNAAVERFRSEEFPMIRVDSIYLDHAGTTLCPKSLLEAFARDMAGNLYGNPHSASNSSQLSTSRIEDIRLQALQLFGASPDEFDLVFVANATAGIKLVSESLRARDGGFGFLYHQASHTSLVGVREEAQSSICLSEDETEELLAGSTTSLDLVTRSPPGAVLLAYTAQSNFDGRRYPLTWADKVRRAHASGCTPICTLLDAASFVSTSPLHLGESKAAPDFTVLSFYKIFGFPDLGALIVRKQAWHLFESRKYFGGGTVDMVVNFKESWHAPKNGFLHERLEDGTLPIHNILALGSAIKIHQGLFGPMRTVSSHATFLAQEMITNLQNLHHSNGEKVCTLYSPYPKPNVDGNGWNQGPIIAFNICTSNGSWVSLGEFEKLASLRDINIRTGSLCNPGGIAIALALEPWEMKRNFSAGLRCGADNDMALGKPTGVIRASLGAMSTTSDVDRFVAFIVEFFCDDGAASRDLQTPRVQPSLASGEAELCVDSLTIYPIKSCAGYSIPHGKQWQVRPEGLAWDREWCLLHRGSGQALSQKRYPKMALIKPVVDLESGRLAVGYLGEPIPYLPERVSVPLSHDPSVFRPSTYVSAAPSRVCGDQVATKIYHDDELNEFFSKAIGVPCVLARFPPGSQHGDAQRSSKARLQKHQITTDQESDVQEVHPGSGTTTDSTWGNDKSQNILLSNESPILLINLASVDALNQEIKSRKGSSAVRIPTSAFRANVVLRRTDESRPDGAQGLPYAEERWRGLTIGNQTYTMLGACRRCQMVCVDQVTGCRGDEPFSTLSKTRRFDGKVFFGVHMAWGPGSPSNNVVAARGDVAYPTIEVGERVLVHV.

Position 236 is an N6-(pyridoxal phosphate)lysine (K236). C402 is an active-site residue. Positions 637–680 (PGSQHGDAQRSSKARLQKHQITTDQESDVQEVHPGSGTTTDSTW) are disordered. Positions 663–831 (SDVQEVHPGS…AARGDVAYPT (169 aa)) constitute an MOSC domain.

The protein belongs to the class-V pyridoxal-phosphate-dependent aminotransferase family. MOCOS subfamily. Pyridoxal 5'-phosphate serves as cofactor.

The catalysed reaction is Mo-molybdopterin + L-cysteine + AH2 = thio-Mo-molybdopterin + L-alanine + A + H2O. It functions in the pathway cofactor biosynthesis; molybdopterin biosynthesis. In terms of biological role, sulfurates the molybdenum cofactor. Sulfation of molybdenum is essential for xanthine dehydrogenase (XDH) and aldehyde oxidase (ADO) enzymes in which molybdenum cofactor is liganded by 1 oxygen and 1 sulfur atom in active form. This chain is Molybdenum cofactor sulfurase, found in Pyricularia oryzae (strain 70-15 / ATCC MYA-4617 / FGSC 8958) (Rice blast fungus).